The primary structure comprises 235 residues: Large ribosomal subunit protein uL1 (235 aa).

This sequence belongs to the universal ribosomal protein uL1 family. As to quaternary structure, part of the 50S ribosomal subunit.

Functionally, binds directly to 23S rRNA. The L1 stalk is quite mobile in the ribosome, and is involved in E site tRNA release. In terms of biological role, protein L1 is also a translational repressor protein, it controls the translation of the L11 operon by binding to its mRNA. This chain is Large ribosomal subunit protein uL1, found in Prochlorococcus marinus (strain MIT 9312).